Consider the following 204-residue polypeptide: MTRVKICGIRSLEEAIAAREAGAWAIGQVFAPSPRRLEVDIAAAINRELGQSILKIGVFVNEEAENLRRIVASCRLDMVQLHGDEEPAYLEEVSVPVIKSFRVRGSLELEQLKRWRPWAYLFDSYHPGVYGGTGESFDWSFLQEIARQERIILAGGLNTENVGRAIHQLRPLVVDVSSGVEYPSGGKDPAKIREFINIVQEQAT.

This sequence belongs to the TrpF family.

The catalysed reaction is N-(5-phospho-beta-D-ribosyl)anthranilate = 1-(2-carboxyphenylamino)-1-deoxy-D-ribulose 5-phosphate. The protein operates within amino-acid biosynthesis; L-tryptophan biosynthesis; L-tryptophan from chorismate: step 3/5. The polypeptide is N-(5'-phosphoribosyl)anthranilate isomerase (Syntrophomonas wolfei subsp. wolfei (strain DSM 2245B / Goettingen)).